Here is a 276-residue protein sequence, read N- to C-terminus: Large ribosomal subunit protein uL2 (276 aa).

The interval 224 to 276 is disordered; that stretch reads VAMNPVDHPHGGGEGKTGEGRVPVSPWGTPTKGYRTRRNKRTTSMIVQRRQKR. Over residues 230-242 the composition is skewed to basic and acidic residues; that stretch reads DHPHGGGEGKTGE.

It belongs to the universal ribosomal protein uL2 family. In terms of assembly, part of the 50S ribosomal subunit. Forms a bridge to the 30S subunit in the 70S ribosome.

Its function is as follows. One of the primary rRNA binding proteins. Required for association of the 30S and 50S subunits to form the 70S ribosome, for tRNA binding and peptide bond formation. It has been suggested to have peptidyltransferase activity; this is somewhat controversial. Makes several contacts with the 16S rRNA in the 70S ribosome. This chain is Large ribosomal subunit protein uL2, found in Polynucleobacter asymbioticus (strain DSM 18221 / CIP 109841 / QLW-P1DMWA-1) (Polynucleobacter necessarius subsp. asymbioticus).